The sequence spans 264 residues: Phosphoribosylaminoimidazole-succinocarboxamide synthase (264 aa).

The protein belongs to the SAICAR synthetase family.

It catalyses the reaction 5-amino-1-(5-phospho-D-ribosyl)imidazole-4-carboxylate + L-aspartate + ATP = (2S)-2-[5-amino-1-(5-phospho-beta-D-ribosyl)imidazole-4-carboxamido]succinate + ADP + phosphate + 2 H(+). The protein operates within purine metabolism; IMP biosynthesis via de novo pathway; 5-amino-1-(5-phospho-D-ribosyl)imidazole-4-carboxamide from 5-amino-1-(5-phospho-D-ribosyl)imidazole-4-carboxylate: step 1/2. The chain is Phosphoribosylaminoimidazole-succinocarboxamide synthase (purC) from Synechocystis sp. (strain ATCC 27184 / PCC 6803 / Kazusa).